A 121-amino-acid polypeptide reads, in one-letter code: Flagellar protein FliT (121 aa).

The required for homodimerization stretch occupies residues 1-50; that stretch reads MNHAPHLYFAWQQLVDKSQLMLRLATEEQWDELIASEMAYVNAVQEIAHL. Residues 60 to 98 form a fliD binding region; it reads MQEQLRPMLRLILDNESKVKQLLQIRMDELAKLVGQSSV.

This sequence belongs to the FliT family. Homodimer. Interacts with FliD and FlhC.

The protein resides in the cytoplasm. Its subcellular location is the cytosol. Dual-function protein that regulates the transcription of class 2 flagellar operons and that also acts as an export chaperone for the filament-capping protein FliD. As a transcriptional regulator, acts as an anti-FlhDC factor; it directly binds FlhC, thus inhibiting the binding of the FlhC/FlhD complex to class 2 promoters, resulting in decreased expression of class 2 flagellar operons. As a chaperone, effects FliD transition to the membrane by preventing its premature polymerization, and by directing it to the export apparatus. This chain is Flagellar protein FliT, found in Shigella sonnei (strain Ss046).